Reading from the N-terminus, the 258-residue chain is Imidazole glycerol phosphate synthase subunit HisF (258 aa).

Active-site residues include D11 and D130.

This sequence belongs to the HisA/HisF family. As to quaternary structure, heterodimer of HisH and HisF.

Its subcellular location is the cytoplasm. It carries out the reaction 5-[(5-phospho-1-deoxy-D-ribulos-1-ylimino)methylamino]-1-(5-phospho-beta-D-ribosyl)imidazole-4-carboxamide + L-glutamine = D-erythro-1-(imidazol-4-yl)glycerol 3-phosphate + 5-amino-1-(5-phospho-beta-D-ribosyl)imidazole-4-carboxamide + L-glutamate + H(+). Its pathway is amino-acid biosynthesis; L-histidine biosynthesis; L-histidine from 5-phospho-alpha-D-ribose 1-diphosphate: step 5/9. Functionally, IGPS catalyzes the conversion of PRFAR and glutamine to IGP, AICAR and glutamate. The HisF subunit catalyzes the cyclization activity that produces IGP and AICAR from PRFAR using the ammonia provided by the HisH subunit. In Gluconacetobacter diazotrophicus (strain ATCC 49037 / DSM 5601 / CCUG 37298 / CIP 103539 / LMG 7603 / PAl5), this protein is Imidazole glycerol phosphate synthase subunit HisF.